The primary structure comprises 152 residues: UPF0178 protein swp_1285 (152 aa).

This sequence belongs to the UPF0178 family.

In Shewanella piezotolerans (strain WP3 / JCM 13877), this protein is UPF0178 protein swp_1285.